The following is a 387-amino-acid chain: Cobalt-precorrin-5B C(1)-methyltransferase (387 aa).

This sequence belongs to the CbiD family.

The catalysed reaction is Co-precorrin-5B + S-adenosyl-L-methionine = Co-precorrin-6A + S-adenosyl-L-homocysteine. Its pathway is cofactor biosynthesis; adenosylcobalamin biosynthesis; cob(II)yrinate a,c-diamide from sirohydrochlorin (anaerobic route): step 6/10. Catalyzes the methylation of C-1 in cobalt-precorrin-5B to form cobalt-precorrin-6A. The sequence is that of Cobalt-precorrin-5B C(1)-methyltransferase from Desulfitobacterium hafniense (strain Y51).